Consider the following 156-residue polypeptide: Ribosomal RNA large subunit methyltransferase H (156 aa).

Residues Leu-73, Gly-104, and 123 to 128 (LSALTL) each bind S-adenosyl-L-methionine.

Belongs to the RNA methyltransferase RlmH family. Homodimer.

The protein localises to the cytoplasm. It catalyses the reaction pseudouridine(1915) in 23S rRNA + S-adenosyl-L-methionine = N(3)-methylpseudouridine(1915) in 23S rRNA + S-adenosyl-L-homocysteine + H(+). In terms of biological role, specifically methylates the pseudouridine at position 1915 (m3Psi1915) in 23S rRNA. In Psychromonas ingrahamii (strain DSM 17664 / CCUG 51855 / 37), this protein is Ribosomal RNA large subunit methyltransferase H.